Here is a 3241-residue protein sequence, read N- to C-terminus: PHD finger protein rhinoceros (3241 aa).

The segment covering 1–16 (MSQRGKRGNQQHHQSH) has biased composition (basic residues). Positions 1–126 (MSQRGKRGNQ…GASSSSSWQA (126 aa)) are disordered. 2 stretches are compositionally biased toward low complexity: residues 42–55 (PPNG…AEVT) and 90–126 (RAAA…SWQA). The PHD-type 1 zinc finger occupies 312 to 362 (NVICDVCRSPDSEEANEMVFCDNCNICVHQACYGITAIPSGQWLCRTCSMG). The C2HC pre-PHD-type zinc-finger motif lies at 364–398 (KPDCVLCPNKGGAMKSNKSGKHWAHVSCALWIPEV). The PHD-type 2 zinc-finger motif lies at 422–481 (LICVLCRKRVGSCIQCSVKPCKTAYHVTCAFQHGLEMRAIIEEGNAEDGVKLRSYCQKHS). Disordered stretches follow at residues 482 to 501 (MSKG…ASVA), 508 to 554 (NRYG…ARAQ), 737 to 1266 (SGKQ…VATP), 1279 to 1483 (PQRQ…STKV), 1500 to 1613 (PKTN…SETR), and 1632 to 1746 (NLGA…QHLL). Over residues 540–554 (KTELTSEERNQARAQ) the composition is skewed to basic and acidic residues. Polar residues predominate over residues 762-777 (KKLNNGILSSRTSSPE). Over residues 807–874 (KSSAAAATST…SGSSSAGSGV (68 aa)) the composition is skewed to low complexity. Residues 931–943 (ERCRNRQEPERGA) are compositionally biased toward basic and acidic residues. Positions 949–965 (QSKSVPNRSQASRSKPT) are enriched in polar residues. Over residues 995-1007 (DADESVSSDESEE) the composition is skewed to acidic residues. Residues 1019–1031 (STTTSGLATTGSA) show a composition bias toward low complexity. A compositionally biased stretch (polar residues) spans 1060–1075 (TVESNVSDSQNQQTIR). Residues 1087–1104 (TAATTSSTSQAASSTSKA) show a composition bias toward low complexity. 2 stretches are compositionally biased toward polar residues: residues 1117–1126 (IGNSTKTKPN) and 1151–1163 (NMRS…TLQP). The segment covering 1184-1211 (KVKDSSSRVSNEADKSSLEKVRPKEHLQ) has biased composition (basic and acidic residues). Polar residues predominate over residues 1313–1327 (VTSATISGSGSSVPA). T1346 carries the post-translational modification Phosphothreonine. A Phosphoserine modification is found at S1352. At T1364 the chain carries Phosphothreonine. Residues 1382-1426 (SSSSSGDSESSSSSSSSGSSSSSGGSDSDSESQASNSENPSSREP) show a composition bias toward low complexity. T1456 is modified (phosphothreonine). The span at 1463–1483 (NVLNIPSTRSRQNSTTKSTKV) shows a compositional bias: polar residues. Over residues 1541–1558 (SPEKTVSRCKSRAEESPK) the composition is skewed to basic and acidic residues. Residues 1576–1594 (KGTSSLDKLLNKKQQQMNH) are compositionally biased toward polar residues. A compositionally biased stretch (pro residues) spans 1599–1608 (TPPPISPTPP). The segment covering 1664-1675 (TAPTRTQLSASA) has biased composition (polar residues). A compositionally biased stretch (pro residues) spans 1688-1699 (PAAPLPASPTPT). Basic residues predominate over residues 1717 to 1731 (RRMRWRSRRRRRRRS). Coiled coils occupy residues 1741–1770 (HTQH…ASKY) and 1893–1925 (SEED…KEAV). Disordered regions lie at residues 2037–2061 (LEKS…GQPA), 2124–2148 (AERR…PVVT), 2203–2227 (NNTN…TPNN), 2346–2454 (TPPV…GGVT), 2598–2629 (ATGT…PAPN), 2667–2691 (SEEV…ARSQ), 2768–2811 (NDDS…NSSS), 2832–2911 (GAGA…SVDE), 2964–3015 (NKRG…TTTM), 3042–3169 (KAET…EAAM), and 3184–3241 (VNVG…CEVR). Positions 2359 to 2381 (KRTSVSGSNLSKKQTHKSPQLPQ) are enriched in polar residues. Residues 2392–2402 (PLQPPTPPAPV) show a composition bias toward pro residues. The span at 2430-2439 (GSGGSGAPGR) shows a compositional bias: gly residues. Polar residues-rich tracts occupy residues 2598 to 2611 (ATGT…QHSG) and 2673 to 2689 (DSDS…SDAR). Over residues 2855-2865 (NNDNNGKTGAA) the composition is skewed to polar residues. The segment covering 2876–2887 (KTLESSEDDHQA) has biased composition (basic and acidic residues). Phosphoserine is present on residues S2880 and S2881. Residues 2899–2911 (ANETPSGVSSVDE) show a composition bias toward polar residues. Positions 2964-2974 (NKRGVVVKDGE) are enriched in basic and acidic residues. Positions 2984-3002 (KRPKSSKPKKEKKEKKRQK) are enriched in basic residues. The segment covering 3003 to 3015 (QQQLILSSSTTTM) has biased composition (low complexity). Phosphoserine is present on residues S3104 and S3110. Composition is skewed to polar residues over residues 3115–3130 (LLNS…NTSP) and 3184–3197 (VNVG…NSLP). Low complexity predominate over residues 3198 to 3218 (SASGTGSASSNSCNSNSINNN). Over residues 3219–3230 (GSGGGRASGEGG) the composition is skewed to gly residues.

It belongs to the JADE family.

The protein resides in the nucleus. In terms of biological role, may function as a negative regulator of the EGFR/Ras/MAPK signaling pathway during eye development. The sequence is that of PHD finger protein rhinoceros (rno) from Drosophila melanogaster (Fruit fly).